Consider the following 439-residue polypeptide: Tol-Pal system protein TolB (439 aa).

An N-terminal signal peptide occupies residues 1-22; the sequence is MKKPLRWLAALTVLLLPLSALA.

Belongs to the TolB family. The Tol-Pal system is composed of five core proteins: the inner membrane proteins TolA, TolQ and TolR, the periplasmic protein TolB and the outer membrane protein Pal. They form a network linking the inner and outer membranes and the peptidoglycan layer.

It is found in the periplasm. In terms of biological role, part of the Tol-Pal system, which plays a role in outer membrane invagination during cell division and is important for maintaining outer membrane integrity. The protein is Tol-Pal system protein TolB of Xanthomonas oryzae pv. oryzae (strain KACC10331 / KXO85).